The following is a 105-amino-acid chain: Large ribosomal subunit protein uL24 (105 aa).

It belongs to the universal ribosomal protein uL24 family. In terms of assembly, part of the 50S ribosomal subunit.

One of two assembly initiator proteins, it binds directly to the 5'-end of the 23S rRNA, where it nucleates assembly of the 50S subunit. In terms of biological role, one of the proteins that surrounds the polypeptide exit tunnel on the outside of the subunit. The protein is Large ribosomal subunit protein uL24 of Rhodospirillum centenum (strain ATCC 51521 / SW).